The following is a 126-amino-acid chain: Small ribosomal subunit protein uS11 (126 aa).

The protein belongs to the universal ribosomal protein uS11 family. In terms of assembly, part of the 30S ribosomal subunit. Interacts with proteins S7 and S18. Binds to IF-3.

Its function is as follows. Located on the platform of the 30S subunit, it bridges several disparate RNA helices of the 16S rRNA. Forms part of the Shine-Dalgarno cleft in the 70S ribosome. The polypeptide is Small ribosomal subunit protein uS11 (Orientia tsutsugamushi (strain Boryong) (Rickettsia tsutsugamushi)).